A 378-amino-acid chain; its full sequence is 1-acyl-sn-glycerol-3-phosphate acyltransferase delta (378 aa).

Residues 11 to 31 traverse the membrane as a helical segment; it reads FLCHLVFCYVFIASGLIINTI. The short motif at 96-101 is the HXXXXD motif element; sequence HKFEID. Helical transmembrane passes span 125–145, 307–327, and 338–358; these read ELAYVPIIGWMWYFTEMVFCS, TLVNWLFWASLVLYPFFQFLV, and LASFILVFFVASVGVRWMIGV.

The protein belongs to the 1-acyl-sn-glycerol-3-phosphate acyltransferase family. As to expression, widely expressed with highest levels in skeletal muscle, followed by heart, liver, prostate and thymus.

It is found in the endoplasmic reticulum membrane. It carries out the reaction a 1-acyl-sn-glycero-3-phosphate + an acyl-CoA = a 1,2-diacyl-sn-glycero-3-phosphate + CoA. It catalyses the reaction (4Z,7Z,10Z,13Z,16Z,19Z)-docosahexaenoyl-CoA + 1-hexadecanoyl-sn-glycero-3-phosphate = 1-hexadecanoyl-2-(4Z,7Z,10Z,13Z,16Z,19Z-docosahexaenoyl)-sn-glycero-3-phosphate + CoA. The catalysed reaction is 1-octadecanoyl-sn-glycero-3-phosphate + (9Z,12Z)-octadecadienoyl-CoA = 1-octadecanoyl-2-(9Z,12Z-octadecadienoyl)-sn-glycero-3-phosphate + CoA. The enzyme catalyses 1-octadecanoyl-sn-glycero-3-phosphate + (4Z,7Z,10Z,13Z,16Z,19Z)-docosahexaenoyl-CoA = 1-octadecanoyl-2-(4Z,7Z,10Z,13Z,16Z,19Z-docosahexaenoyl)-sn-glycero-3-phosphate + CoA. It carries out the reaction (4Z,7Z,10Z,13Z,16Z,19Z)-docosahexaenoyl-CoA + 1-(9Z-octadecenoyl)-sn-glycero-3-phosphate = 1-(9Z-octadecenoyl)-2-(4Z,7Z,10Z,13Z,16Z,19Z-docosahexaenoyl)-sn-glycero-3-phosphate + CoA. The protein operates within phospholipid metabolism; CDP-diacylglycerol biosynthesis; CDP-diacylglycerol from sn-glycerol 3-phosphate: step 2/3. Functionally, converts 1-acyl-sn-glycerol-3-phosphate (lysophosphatidic acid or LPA) into 1,2-diacyl-sn-glycerol-3-phosphate (phosphatidic acid or PA) by incorporating an acyl moiety at the sn-2 position of the glycerol backbone. Exhibits high acyl-CoA specificity for polyunsaturated fatty acyl-CoA, especially docosahexaenoyl-CoA (22:6-CoA, DHA-CoA). This is 1-acyl-sn-glycerol-3-phosphate acyltransferase delta (AGPAT4) from Homo sapiens (Human).